Consider the following 1934-residue polypeptide: MADREMAAFGAAAFLRKSEKERLEAQTRPFDLKKDVFVPDDKEEFVKAKIVSREGGKVTAETENGKTVTVKEDQVMQQNPPKFDKIEDMAMLTFLHEPAVLYNLKDGYASWMIYTYSGLFCVTVNPYKWLPVYNAEVVAAYRGKKRSEAPAHIFSISDNAYQYMLTDRENQSILITGESGAGKTVNTKRVIQYFAVIAAIGDRSKKDQTPGKGTLEDQIIQANPALEAFGNAKTVRNDNSSRFGKFIRIHFGATGKLASADIETYLLEKSRVIFQLKAERDYHIFYQILSNKKPELLDMLLITNNPYDYAFIPQGETTVASIDDSEELMATDSAFDVLGFTSEEKNSIYKLTGAIMHFGNMKFKQKQREEQADRDGTEEEDKSAYLMGLNSADLLKGMCHPRVKVGNEYVTKGQNVQQVSYAIGALAKSVYEKMFNWMVTRINATLETKQPRQYFIGVLDIAGFEIFDFNSFEQLCINFTNEKLQQFFNHHMFVLEQEEYKKEGIEWTFIDFGMDLQACIDLIEKPMRIMSILEEECMFPKATDMTFKAKLYDNHLGKSNNFQKPRNVKGKQEAHFSLVHYAGTVDYNILGWLQKNKDPLNETVVGLYQKSSLKLLSNLFANYAGADAPVDKGKGKAKKGSSFQTVSVLHRENLNKLMTNLRSTHPHFVRCIIPNETKSPGVMDNPLVMHQLRCNGVLEGIRICRKGFPNRILYGDFRQRYRILNPAAIPEGQFIDSRKGAEKLLSSLDIDHNQYKFGHTKVFFKAGLLGLLEEMRDERLSRIITRIQAQSRGLLSRMEFKKLLERRDSLLVIQWNIRAFMGVKNWPWMKLYFKIKPLLKSAETEKEMATMKEEFGRVKDALEKSEARRKELEEKMVSLLQEKNDLQLQVQAEQDNLADAEERCDQLIKNKIQLEAKVKEMTERLEDEEEMNAELTAKKRKLEDECSELKRDIDDLELTLAKVEKDKHATENKVKNLTEEMAGLDEIIAKLTKEKKALQEAHQQALDDLQAEEDKVNTLTKSKVKLEQQVDDLEGSLEQEKKVRMDLERAKRKLEGDLKLTQESIMDLENDKQQLDEKLKKKDFELNALNARIEDEQALGSQLQKKLKELQARIEELEEELEAERTARAKVEKLRSDLSRELEEISERLEEAGGATSVQIEMNKKREAEFQKMRRDLEEATLQHEATAAALRKKHADSVAELGEQIDNLQRVKQKLEKEKSEFKLELDDVTSNMEQIIKAKANLEKMCRTLEDQMNEHRSKAEETQRSVNDLTSQRAKLQTENGELSRQLDEKEALISQLTRGKLTYTQQLEDLKRQLEEEVKAKNTLAHALQSARHDCDLLREQYEEETEAKAELQCVLSKANSEVAQWRTKYETDAIQRTEELEEAKKKLAQRLQDAEEAVEAVNAKCSSLEKTKHRLQNEIEDLMVDVERSNAAAAALDKKQRNFDKILAEWKQKYEESQSELESSQKEARSLSTELFKLKNAYEESLEHLETFKRENKNLQEEISDLTEQLGSTGKSIHELEKIRKQLEAEKMELQSALEEAEASLEHEEGNILRAQLEFNQIKAEIERKLAEKDEEMEQAKRNHLRVVDSLQTSLDAETRSRNEALRVKKKMEGDLNEMEIQLSHANRMAAEAQKQVKSLQSLLKDTQIQLDDAVRANDDLKENIAIVERRNNLLQAELEELRAVVEQTERSRKLAEQELIETSERVQLLHSQNTSLINQKKKMDADLSQLQTEVEEAVQECRNAEEKAKKAITDAAMMAEELKKEQDTSAHLERMKKNMEQTIKDLQHRLDEAEQIALKGGKKQLQKLEARVRELENELEAEQKRNAESVKGMRKSERRIKELTYQTEEDRKNLLRLQDLVDKLQLKVKAYKRQAEEAEEQANTNLSKFRKVQHELDEAEERADIAESQVNKLRAKSRDIGAKGLNEE.

Positions 31-80 (DLKKDVFVPDDKEEFVKAKIVSREGGKVTAETENGKTVTVKEDQVMQQNP) constitute a Myosin N-terminal SH3-like domain. A Myosin motor domain is found at 84–777 (DKIEDMAMLT…LLGLLEEMRD (694 aa)). Position 128 is an N6,N6,N6-trimethyllysine (Lys128). Residue 177 to 184 (GESGAGKT) participates in ATP binding. Thr377 is modified (phosphothreonine). Actin-binding regions lie at residues 654 to 676 (LNKLMTNLRSTHPHFVRCIIPNE) and 756 to 770 (KFGHTKVFFKAGLLG). Positions 780-809 (LSRIITRIQAQSRGLLSRMEFKKLLERRDS) constitute an IQ domain. Residues 839 to 1934 (LKSAETEKEM…DIGAKGLNEE (1096 aa)) are a coiled coil. A phosphoserine mark is found at Ser1136 and Ser1268. Thr1281 is subject to Phosphothreonine. Tyr1307 is subject to Phosphotyrosine. Thr1308 carries the post-translational modification Phosphothreonine. Phosphoserine is present on Ser1509. At Thr1512 the chain carries Phosphothreonine. The interval 1914–1934 (SQVNKLRAKSRDIGAKGLNEE) is disordered. Over residues 1922–1934 (KSRDIGAKGLNEE) the composition is skewed to basic and acidic residues.

The protein belongs to the TRAFAC class myosin-kinesin ATPase superfamily. Myosin family. Muscle myosin is a hexameric protein that consists of 2 heavy chain subunits (MHC), 2 alkali light chain subunits (MLC) and 2 regulatory light chain subunits (MLC-2). Interacts with ECPAS. Interacts (via C-terminus) with LRRC39.

The protein localises to the cytoplasm. It is found in the myofibril. The protein resides in the sarcomere. Myosins are actin-based motor molecules with ATPase activity essential for muscle contraction. Forms regular bipolar thick filaments that, together with actin thin filaments, constitute the fundamental contractile unit of skeletal and cardiac muscle. The sequence is that of Myosin-7 (MYH7) from Mesocricetus auratus (Golden hamster).